The following is a 105-amino-acid chain: Large ribosomal subunit protein uL24 (105 aa).

This sequence belongs to the universal ribosomal protein uL24 family. As to quaternary structure, part of the 50S ribosomal subunit.

Functionally, one of two assembly initiator proteins, it binds directly to the 5'-end of the 23S rRNA, where it nucleates assembly of the 50S subunit. One of the proteins that surrounds the polypeptide exit tunnel on the outside of the subunit. The sequence is that of Large ribosomal subunit protein uL24 from Parvibaculum lavamentivorans (strain DS-1 / DSM 13023 / NCIMB 13966).